The sequence spans 227 residues: Ribonuclease 3 (227 aa).

One can recognise an RNase III domain in the interval 4 to 126 (LDRLERKIGY…IIGAMSLDQG (123 aa)). Glu-39 provides a ligand contact to Mg(2+). Asp-43 is an active-site residue. Positions 112 and 115 each coordinate Mg(2+). Glu-115 is an active-site residue. The DRBM domain occupies 153–226 (DAKTRLQEYL…AEQILKELDI (74 aa)).

This sequence belongs to the ribonuclease III family. As to quaternary structure, homodimer. The cofactor is Mg(2+).

It localises to the cytoplasm. The enzyme catalyses Endonucleolytic cleavage to 5'-phosphomonoester.. In terms of biological role, digests double-stranded RNA. Involved in the processing of primary rRNA transcript to yield the immediate precursors to the large and small rRNAs (23S and 16S). Processes some mRNAs, and tRNAs when they are encoded in the rRNA operon. Processes pre-crRNA and tracrRNA of type II CRISPR loci if present in the organism. In Haemophilus influenzae (strain ATCC 51907 / DSM 11121 / KW20 / Rd), this protein is Ribonuclease 3.